Consider the following 372-residue polypeptide: Fatty acid 2-hydroxylase (372 aa).

Positions 8 to 86 (AASFSPSEVQ…LEQYYVGELR (79 aa)) constitute a Cytochrome b5 heme-binding domain. His43 and His69 together coordinate heme. A run of 2 helical transmembrane segments spans residues 168-188 (VWYS…WSYY) and 213-233 (SMFP…EYLI). Residues 219–361 (FMLGTFLWSL…TKLWDYCFHT (143 aa)) form the Fatty acid hydroxylase domain. Positions 234, 239, 257, 260, and 261 each coordinate Zn(2+). 2 consecutive transmembrane segments (helical) span residues 268 to 288 (SRLV…YLCM) and 290 to 310 (LILP…GYVL). His315, His319, His336, His339, and His340 together coordinate Zn(2+).

It belongs to the sterol desaturase family. SCS7 subfamily. Zn(2+) is required as a cofactor. Detected in differentiating cultured keratinocytes (at protein level). Detected in epidermis and cultured keratinocytes. Highly expressed in brain and colon. Detected at lower levels in testis, prostate, pancreas and kidney.

The protein resides in the endoplasmic reticulum membrane. It localises to the microsome membrane. It catalyses the reaction a 1,2-saturated fatty acid + 2 Fe(II)-[cytochrome b5] + O2 + 2 H(+) = a (R)-2-hydroxy fatty acid + 2 Fe(III)-[cytochrome b5] + H2O. It carries out the reaction hexadecanoate + 2 Fe(II)-[cytochrome b5] + O2 + 2 H(+) = (R)-2-hydroxyhexadecanoate + 2 Fe(III)-[cytochrome b5] + H2O. The enzyme catalyses octadecanoate + 2 Fe(II)-[cytochrome b5] + O2 + 2 H(+) = (R)-2-hydroxyoctadecanoate + 2 Fe(III)-[cytochrome b5] + H2O. The catalysed reaction is docosanoate + 2 Fe(II)-[cytochrome b5] + O2 + 2 H(+) = 2-hydroxydocosanoate + 2 Fe(III)-[cytochrome b5] + H2O. It catalyses the reaction tetracosanoate + 2 Fe(II)-[cytochrome b5] + O2 + 2 H(+) = (R)-2-hydroxytetracosanoate + 2 Fe(III)-[cytochrome b5] + H2O. It participates in lipid metabolism; fatty acid metabolism. Its pathway is sphingolipid metabolism; galactosylceramide biosynthesis. Catalyzes the hydroxylation of free fatty acids at the C-2 position to produce 2-hydroxy fatty acids, which are building blocks of sphingolipids and glycosphingolipids common in neural tissue and epidermis. FA2H is stereospecific for the production of (R)-2-hydroxy fatty acids. Plays an essential role in the synthesis of galactosphingolipids of the myelin sheath. Responsible for the synthesis of sphingolipids and glycosphingolipids involved in the formation of epidermal lamellar bodies critical for skin permeability barrier. Participates in the synthesis of glycosphingolipids and a fraction of type II wax diesters in sebaceous gland, specifically regulating hair follicle homeostasis. Involved in the synthesis of sphingolipids of plasma membrane rafts, controlling lipid raft mobility and trafficking of raft-associated proteins. This chain is Fatty acid 2-hydroxylase, found in Homo sapiens (Human).